A 116-amino-acid chain; its full sequence is Putative pterin-4-alpha-carbinolamine dehydratase (116 aa).

It belongs to the pterin-4-alpha-carbinolamine dehydratase family.

The catalysed reaction is (4aS,6R)-4a-hydroxy-L-erythro-5,6,7,8-tetrahydrobiopterin = (6R)-L-erythro-6,7-dihydrobiopterin + H2O. The polypeptide is Putative pterin-4-alpha-carbinolamine dehydratase (Xylella fastidiosa (strain M23)).